We begin with the raw amino-acid sequence, 456 residues long: Alcohol acyl transferase 1 allele GSc (456 aa).

Catalysis depends on proton acceptor residues histidine 165 and asparagine 386.

It belongs to the plant acyltransferase family. Expressed at very low levels in the skin of ripe fruit.

Involved in the biosynthesis of volatile esters which confer ripe apple fruit flavor. Alcohol acyl transferase that can use a wide range of alcohols as substrate to produce esters. In Malus domestica (Apple), this protein is Alcohol acyl transferase 1 allele GSc.